A 566-amino-acid chain; its full sequence is Oxygen-dependent choline dehydrogenase (566 aa).

7-36 (DYIICGAGSAGNVLATRLTEDPDVTVLLLE) contributes to the FAD binding site. A disordered region spans residues 180–202 (NGYQQEGFGPMDRTVTPKGRRAS). Histidine 474 acts as the Proton acceptor in catalysis.

The protein belongs to the GMC oxidoreductase family. FAD is required as a cofactor.

It catalyses the reaction choline + A = betaine aldehyde + AH2. The enzyme catalyses betaine aldehyde + NAD(+) + H2O = glycine betaine + NADH + 2 H(+). It functions in the pathway amine and polyamine biosynthesis; betaine biosynthesis via choline pathway; betaine aldehyde from choline (cytochrome c reductase route): step 1/1. Its function is as follows. Involved in the biosynthesis of the osmoprotectant glycine betaine. Catalyzes the oxidation of choline to betaine aldehyde and betaine aldehyde to glycine betaine at the same rate. This chain is Oxygen-dependent choline dehydrogenase, found in Burkholderia orbicola (strain MC0-3).